Reading from the N-terminus, the 80-residue chain is Peroxidase (80 aa).

The interval 56-80 (DANEAEANSDLPGFNSSRSELEAAF) is disordered. Position 67 (proline 67) interacts with substrate. Asparagine 70 is a glycosylation site (N-linked (GlcNAc...) asparagine).

The protein belongs to the peroxidase family. Classical plant (class III) peroxidase subfamily. The cofactor is Ca(2+). Requires heme b as cofactor.

The enzyme catalyses 2 a phenolic donor + H2O2 = 2 a phenolic radical donor + 2 H2O. In terms of biological role, removal of H(2)O(2), oxidation of toxic reductants, biosynthesis and degradation of lignin, suberization, auxin catabolism, response to environmental stresses such as wounding, pathogen attack and oxidative stress. These functions might be dependent on each isozyme/isoform in each plant tissue. This is Peroxidase from Triticum aestivum (Wheat).